The primary structure comprises 285 residues: Probable ribosomal RNA small subunit methyltransferase A (285 aa).

S-adenosyl-L-methionine contacts are provided by histidine 29, leucine 31, glycine 58, glutamate 79, aspartate 107, and asparagine 122.

The protein belongs to the class I-like SAM-binding methyltransferase superfamily. rRNA adenine N(6)-methyltransferase family. RsmA subfamily.

It is found in the cytoplasm. Its function is as follows. Specifically dimethylates two adjacent adenosines in the loop of a conserved hairpin near the 3'-end of 16S rRNA in the 30S particle. May play a critical role in biogenesis of 30S subunits. The polypeptide is Probable ribosomal RNA small subunit methyltransferase A (Haloarcula marismortui (strain ATCC 43049 / DSM 3752 / JCM 8966 / VKM B-1809) (Halobacterium marismortui)).